The chain runs to 367 residues: AA9 family lytic polysaccharide monooxygenase A (367 aa).

The N-terminal stretch at 1-20 (MKSSTFGMLALAAAAKLVSA) is a signal peptide. Position 21 (H21) interacts with Cu(2+). The interval 37-56 (GNSESGYIRSPPSNSPITDV) is disordered. C63 and C183 are oxidised to a cystine. A Cu(2+)-binding site is contributed by H102. H169 is a binding site for O2. Y180 contributes to the Cu(2+) binding site. Residues 234–287 (GASGSSSSPSASASASAPAATSAAPAPSSFTTIAKQPATSSTEAPSTENTSTTS) form a disordered region. Low complexity-rich tracts occupy residues 235–262 (ASGSSSSPSASASASAPAATSAAPAPSS) and 270–287 (PATSSTEAPSTENTSTTS). Residue N282 is glycosylated (N-linked (GlcNAc...) asparagine). Residues 329 to 365 (GAVKEWYQCGGLNYKGSTQCEEGLTCKKWNPYYYQCI) form the CBM1 domain.

This sequence belongs to the polysaccharide monooxygenase AA9 family. Cu(2+) is required as a cofactor.

The protein localises to the secreted. The enzyme catalyses [(1-&gt;4)-beta-D-glucosyl]n+m + reduced acceptor + O2 = 4-dehydro-beta-D-glucosyl-[(1-&gt;4)-beta-D-glucosyl]n-1 + [(1-&gt;4)-beta-D-glucosyl]m + acceptor + H2O.. In terms of biological role, lytic polysaccharide monooxygenase (LPMO) that depolymerizes crystalline and amorphous polysaccharides via the oxidation of scissile alpha- or beta-(1-4)-glycosidic bonds, yielding C4 oxidation products. Catalysis by LPMOs requires the reduction of the active-site copper from Cu(II) to Cu(I) by a reducing agent and H(2)O(2) or O(2) as a cosubstrate. Active on cellulose and cello-oligosaccharides, as well as plant cell wall-derived hemicellulosic polysaccharides. Also active on cello-oligosaccharides such as cellohexaose, cellopentaose or cellotetraose. The protein is AA9 family lytic polysaccharide monooxygenase A of Aspergillus oryzae (strain ATCC 42149 / RIB 40) (Yellow koji mold).